The chain runs to 44 residues: Photosystem I reaction center subunit IX (44 aa).

The chain crosses the membrane as a helical span at residues 7-27 (YLSVAPVLSTLSLGFFAGFLI).

It belongs to the PsaJ family.

The protein resides in the plastid membrane. Functionally, may help in the organization of the PsaE and PsaF subunits. This chain is Photosystem I reaction center subunit IX, found in Cuscuta obtusiflora (Peruvian dodder).